The following is a 368-amino-acid chain: 1-deoxy-D-xylulose 5-phosphate reductoisomerase (368 aa).

NADPH contacts are provided by threonine 10, glycine 11, serine 12, isoleucine 13, glutamine 38, and asparagine 100. Lysine 101 is a binding site for 1-deoxy-D-xylulose 5-phosphate. Glutamate 102 provides a ligand contact to NADPH. Aspartate 125 provides a ligand contact to Mn(2+). 1-deoxy-D-xylulose 5-phosphate is bound by residues serine 126, glutamate 127, serine 151, and histidine 172. Glutamate 127 lines the Mn(2+) pocket. Glycine 178 serves as a coordination point for NADPH. The 1-deoxy-D-xylulose 5-phosphate site is built by serine 185, asparagine 190, lysine 191, and glutamate 194. A Mn(2+)-binding site is contributed by glutamate 194.

It belongs to the DXR family. The cofactor is Mg(2+). Requires Mn(2+) as cofactor.

The enzyme catalyses 2-C-methyl-D-erythritol 4-phosphate + NADP(+) = 1-deoxy-D-xylulose 5-phosphate + NADPH + H(+). The protein operates within isoprenoid biosynthesis; isopentenyl diphosphate biosynthesis via DXP pathway; isopentenyl diphosphate from 1-deoxy-D-xylulose 5-phosphate: step 1/6. In terms of biological role, catalyzes the NADPH-dependent rearrangement and reduction of 1-deoxy-D-xylulose-5-phosphate (DXP) to 2-C-methyl-D-erythritol 4-phosphate (MEP). This Tropheryma whipplei (strain Twist) (Whipple's bacillus) protein is 1-deoxy-D-xylulose 5-phosphate reductoisomerase.